The following is a 218-amino-acid chain: Uracil-DNA glycosylase (218 aa).

Belongs to the uracil-DNA glycosylase (UDG) superfamily. UNG family. In terms of assembly, homodimer. Interacts with protein OPG148. Component of the Uracil-DNA glycosylase(UDG)-OPG148-polymerase complex; OPG148 and UDG form a heterodimeric processivity factor that associates with OPG71 to form the processive polymerase holoenzyme.

The enzyme catalyses Hydrolyzes single-stranded DNA or mismatched double-stranded DNA and polynucleotides, releasing free uracil.. Plays an essential role in viral replication as a component of the DNA polymerase processivity factor. Excises uracil residues from the DNA which can arise as a result of misincorporation of dUMP residues by DNA polymerase or due to deamination of cytosine. The protein is Uracil-DNA glycosylase (OPG116) of Monkeypox virus.